A 139-amino-acid chain; its full sequence is Arsenate reductase (139 aa).

Active-site nucleophile residues include Cys10, Cys82, and Cys89. Disulfide bonds link Cys10–Cys82 and Cys82–Cys89.

It belongs to the low molecular weight phosphotyrosine protein phosphatase family. Thioredoxin-coupled ArsC subfamily. Monomer.

Its subcellular location is the cytoplasm. The catalysed reaction is arsenate + [thioredoxin]-dithiol + H(+) = arsenite + [thioredoxin]-disulfide + H2O. Activity is potassium and sulfate-independent. Its function is as follows. Catalyzes the reduction of arsenate [As(V)] to arsenite [As(III)]. In vitro, can dephosphorylate para-nitrophenyl phosphate (pNPP). The sequence is that of Arsenate reductase from Bacillus subtilis (strain 168).